Consider the following 86-residue polypeptide: Putative membrane protein insertion efficiency factor (86 aa).

The interval 67–86 (LHEGGDDPVPPVKNNDNREH) is disordered.

The protein belongs to the UPF0161 family.

It is found in the cell inner membrane. Functionally, could be involved in insertion of integral membrane proteins into the membrane. This chain is Putative membrane protein insertion efficiency factor, found in Photorhabdus laumondii subsp. laumondii (strain DSM 15139 / CIP 105565 / TT01) (Photorhabdus luminescens subsp. laumondii).